A 171-amino-acid polypeptide reads, in one-letter code: S-ribosylhomocysteine lyase (171 aa).

Fe cation contacts are provided by His54, His58, and Cys128.

It belongs to the LuxS family. In terms of assembly, homodimer. Fe cation serves as cofactor.

The catalysed reaction is S-(5-deoxy-D-ribos-5-yl)-L-homocysteine = (S)-4,5-dihydroxypentane-2,3-dione + L-homocysteine. Involved in the synthesis of autoinducer 2 (AI-2) which is secreted by bacteria and is used to communicate both the cell density and the metabolic potential of the environment. The regulation of gene expression in response to changes in cell density is called quorum sensing. Catalyzes the transformation of S-ribosylhomocysteine (RHC) to homocysteine (HC) and 4,5-dihydroxy-2,3-pentadione (DPD). This is S-ribosylhomocysteine lyase from Campylobacter concisus (strain 13826).